The following is a 339-amino-acid chain: DNA-directed RNA polymerase subunit alpha (339 aa).

Positions 1-233 are alpha N-terminal domain (alpha-NTD); sequence MVREEVAGST…DLFLPFLHAE (233 aa). The interval 264–339 is alpha C-terminal domain (alpha-CTD); that stretch reads KKGIPLNCIF…IDLLKNKLSF (76 aa).

Belongs to the RNA polymerase alpha chain family. In terms of assembly, in plastids the minimal PEP RNA polymerase catalytic core is composed of four subunits: alpha, beta, beta', and beta''. When a (nuclear-encoded) sigma factor is associated with the core the holoenzyme is formed, which can initiate transcription.

It localises to the plastid. The protein localises to the chloroplast. The catalysed reaction is RNA(n) + a ribonucleoside 5'-triphosphate = RNA(n+1) + diphosphate. In terms of biological role, DNA-dependent RNA polymerase catalyzes the transcription of DNA into RNA using the four ribonucleoside triphosphates as substrates. The sequence is that of DNA-directed RNA polymerase subunit alpha from Elymus californicus (California bottlebrush grass).